We begin with the raw amino-acid sequence, 308 residues long: 4-hydroxyproline 2-epimerase (308 aa).

Cys-88 serves as the catalytic Proton acceptor. Residues Gly-89–His-90, His-208, and Asp-232 contribute to the substrate site. Residue Cys-236 is the Proton donor of the active site. Gly-237–Thr-238 is a substrate binding site.

Belongs to the proline racemase family.

It catalyses the reaction trans-4-hydroxy-L-proline = cis-4-hydroxy-D-proline. Catalyzes the epimerization of trans-4-hydroxy-L-proline (t4LHyp) to cis-4-hydroxy-D-proline (c4DHyp). Is likely involved in a degradation pathway that converts t4LHyp to alpha-ketoglutarate. Can also catalyze the epimerization of trans-3-hydroxy-L-proline (t3LHyp) to cis-3-hydroxy-D-proline (c3DHyp), albeit with 19-fold lower efficiency. Displays no proline racemase activity. The chain is 4-hydroxyproline 2-epimerase from Chromobacterium violaceum (strain ATCC 12472 / DSM 30191 / JCM 1249 / CCUG 213 / NBRC 12614 / NCIMB 9131 / NCTC 9757 / MK).